The sequence spans 1104 residues: MERSPGEGPSPSPTDQPSAPSDPTGQPPAAHAKPDPGSGGQPAGPGAAGEALAVLTSFGKRLLVLIPVYLAGAVGLSVGFVLFGLALYLGWRRVRDEKERSLRAARQLLDDEEQLTAKTLYMSHRELPAWVSFPDVEKAEWLNKIVAQVWPFLGQYMEKLLAETVAPAVRGSNPHLQTFTFTRVELGEKPLRIIGVKVHPGQRKEQILLDLNISYVGDVQIDVEVKKYFCKAGVKGMQLHGVLRVILEPLIGDLPIVGAVSMFFIRRPTLDINWTGMTNLLDIPGLSSLSDTMIMDSIAAFLVLPNRLLVPLVPDLQDVAQLRSPLPRGIIRIHLLAARGLTSKDKYVKGLIEGKSDPYALVRLGTQTFCSRVIDEELNPQWGETYEVMVHEVPGQEIEVEVFDKDPDKDDFLGRMKLDVGKVLQAGVLDDWFPLQGGQGQVHLRLEWLSLLSDAEKLEQVLQWNQGVSSRPEPPSAAILVVYLDRAQDLPLKKGNKEPNPMVQLSIQDVTQESKAVYSTNCPVWEEAFRFFLQDPQSQELDVQVKDDSRALTLGALTLPLARLLTAPELILDQWFQLSSSGPNSRLYMKLVMRILYLDSSEICFPTVPGCPGAWDVDSENPQRGSSVDAPPRPCHTTPDSQFGTEHVLRIHVLEAQDLIAKDRFLGGLVKGKSDPYVKLKLAGRSFRSHVVREDLNPRWNEVFEVIVTSVPGQELEVEVFDKDLDKDDFLGRCKVSLTTVLNSGFLDEWLTLEDVPSGRLHLRLERLTPRPTAAELEEVLQVNSLIQTQKSAELAAALLSIYMERAEDLPLRKGTKHPSPYATLTVGDTSHKTKTVSQTSAPVWDESASFLIRKPHTENLELQVRGEGTGVLGSLSLPLSELLVADQLCLDRWFTLNSGQGQVLLRAQLGILVSQHSGVEAHSHSYSHSSSSLSEEPELSGGPPHVTSSAPELRQRLTHVDSSLEAPAGPLGQVKLTVWYYSEERKLVSIVHGCRALRQNGRDPPDPYVSLLLLPDKNRGTKRKTSQKKRTLSPEFNERFEWELPLDEAQRRKLDVSVKSNPSFMSRERELLGKVQLDLAETDLSQGVARWYDLMDDKDKGSS.

The residue at position 1 (Met1) is an N-acetylmethionine. Residues 1-38 (MERSPGEGPSPSPTDQPSAPSDPTGQPPAAHAKPDPGS) lie on the Cytoplasmic side of the membrane. Residues 1-47 (MERSPGEGPSPSPTDQPSAPSDPTGQPPAAHAKPDPGSGGQPAGPGA) are disordered. Residues 15–24 (DQPSAPSDPT) are compositionally biased toward polar residues. A compositionally biased stretch (gly residues) spans 37–47 (GSGGQPAGPGA). Residues 39 to 59 (GGQPAGPGAAGEALAVLTSFG) traverse the membrane as a helical segment. Residues 60-62 (KRL) are Lumenal-facing. The helical transmembrane segment at 63 to 83 (LVLIPVYLAGAVGLSVGFVLF) threads the bilayer. Topologically, residues 84–1104 (GLALYLGWRR…LMDDKDKGSS (1021 aa)) are cytoplasmic. The stretch at 91-116 (WRRVRDEKERSLRAARQLLDDEEQLT) forms a coiled coil. Positions 135–313 (DVEKAEWLNK…LPNRLLVPLV (179 aa)) constitute an SMP-LTD domain. C2 domains lie at 312-433 (LVPD…DDWF), 460-580 (QVLQ…QLSS), 627-751 (SVDA…DEWL), and 777-899 (LEEV…TLNS). Ser324 is subject to Phosphoserine; by CDK5. Lys344, Asp345, Asp357, Asp404, Asp406, Asp408, Asp410, and Asp411 together coordinate Ca(2+). Disordered stretches follow at residues 617 to 641 (VDSENPQRGSSVDAPPRPCHTTPDS), 813 to 833 (RKGTKHPSPYATLTVGDTSHK), and 924 to 950 (SHSYSHSSSSLSEEPELSGGPPHVTSS). Lys817 bears the N6-acetyllysine mark. A phosphoserine mark is found at Ser820 and Ser941. Residues 925-946 (HSYSHSSSSLSEEPELSGGPPH) are compositionally biased toward low complexity. Thr948 bears the Phosphothreonine mark. Phosphoserine is present on residues Ser949 and Ser963. The C2 5 domain maps to 971 to 1093 (PLGQVKLTVW…DLSQGVARWY (123 aa)). Tyr1009 is modified (phosphotyrosine). Residues 1018 to 1025 (KNRGTKRK) form a required for phosphatidylinositol 4,5-bisphosphate-dependent location at the cell membrane region. Ser1034 carries the post-translational modification Phosphoserine.

It belongs to the extended synaptotagmin family. As to quaternary structure, interacts with ESYT2 and ESYT3. Interacts with ADGRD1; inhibiting the G-protein-coupled receptor activity of ADGRD1. Interaction with ADGRD1 is abolished when cytosolic calcium increases, relieving ADGRD1 G-protein-coupled receptor activity. Interacts (phosphorylated form) with SLC2A4. Phosphorylated on Ser residues in insulin-treated adipocytes (in vitro); this promotes interaction with SLC2A4.

Its subcellular location is the endoplasmic reticulum membrane. It is found in the cell membrane. Binds calcium (via the C2 domains) and translocates to sites of contact between the endoplasmic reticulum and the cell membrane in response to increased cytosolic calcium levels. Helps tether the endoplasmic reticulum to the cell membrane and promotes the formation of appositions between the endoplasmic reticulum and the cell membrane. Acts as an inhibitor of ADGRD1 G-protein-coupled receptor activity in absence of cytosolic calcium. Binds glycerophospholipids in a barrel-like domain and may play a role in cellular lipid transport. The chain is Extended synaptotagmin-1 (ESYT1) from Pongo abelii (Sumatran orangutan).